A 156-amino-acid polypeptide reads, in one-letter code: ATP synthase subunit b (156 aa).

The chain crosses the membrane as a helical span at residues 7–29 (LIGQMGTFLVFWWFVNKVIWPMF).

This sequence belongs to the ATPase B chain family. As to quaternary structure, F-type ATPases have 2 components, F(1) - the catalytic core - and F(0) - the membrane proton channel. F(1) has five subunits: alpha(3), beta(3), gamma(1), delta(1), epsilon(1). F(0) has three main subunits: a(1), b(2) and c(10-14). The alpha and beta chains form an alternating ring which encloses part of the gamma chain. F(1) is attached to F(0) by a central stalk formed by the gamma and epsilon chains, while a peripheral stalk is formed by the delta and b chains.

It localises to the cell inner membrane. F(1)F(0) ATP synthase produces ATP from ADP in the presence of a proton or sodium gradient. F-type ATPases consist of two structural domains, F(1) containing the extramembraneous catalytic core and F(0) containing the membrane proton channel, linked together by a central stalk and a peripheral stalk. During catalysis, ATP synthesis in the catalytic domain of F(1) is coupled via a rotary mechanism of the central stalk subunits to proton translocation. In terms of biological role, component of the F(0) channel, it forms part of the peripheral stalk, linking F(1) to F(0). The polypeptide is ATP synthase subunit b (Dichelobacter nodosus (strain VCS1703A)).